Consider the following 847-residue polypeptide: Alpha-glucuronidase (847 aa).

Residues 1 to 19 form the signal peptide; the sequence is MVIRSLLLLLLAAIVPVFA. Residues Asn-52, Asn-238, Asn-321, Asn-353, Asn-586, Asn-692, Asn-740, and Asn-767 are each glycosylated (N-linked (GlcNAc...) asparagine).

Belongs to the glycosyl hydrolase 67 family.

It is found in the secreted. It catalyses the reaction an alpha-D-glucuronoside + H2O = D-glucuronate + an alcohol. Its function is as follows. Releases 4-O-methylglucuronic acid from xylan. The polypeptide is Alpha-glucuronidase (Hypocrea jecorina (Trichoderma reesei)).